We begin with the raw amino-acid sequence, 356 residues long: Methionine import ATP-binding protein MetN 1 (356 aa).

Positions 2–241 (IELKNISVTF…PQQPLTKDFI (240 aa)) constitute an ABC transporter domain. 38–45 (GYSGAGKS) lines the ATP pocket.

The protein belongs to the ABC transporter superfamily. Methionine importer (TC 3.A.1.24) family. As to quaternary structure, the complex is composed of two ATP-binding proteins (MetN), two transmembrane proteins (MetI) and a solute-binding protein (MetQ).

The protein localises to the cell membrane. It catalyses the reaction L-methionine(out) + ATP + H2O = L-methionine(in) + ADP + phosphate + H(+). The enzyme catalyses D-methionine(out) + ATP + H2O = D-methionine(in) + ADP + phosphate + H(+). Functionally, part of the ABC transporter complex MetNIQ involved in methionine import. Responsible for energy coupling to the transport system. This chain is Methionine import ATP-binding protein MetN 1, found in Enterococcus faecalis (strain ATCC 700802 / V583).